The chain runs to 262 residues: Glutamate racemase (262 aa).

Residues 5-6 (DS) and 37-38 (YG) each bind substrate. Cys-69 serves as the catalytic Proton donor/acceptor. 70–71 (NT) lines the substrate pocket. Residue Cys-181 is the Proton donor/acceptor of the active site. Substrate is bound at residue 182–183 (TH).

The protein belongs to the aspartate/glutamate racemases family.

It catalyses the reaction L-glutamate = D-glutamate. It participates in cell wall biogenesis; peptidoglycan biosynthesis. Its function is as follows. Provides the (R)-glutamate required for cell wall biosynthesis. The sequence is that of Glutamate racemase from Buchnera aphidicola subsp. Acyrthosiphon pisum (strain APS) (Acyrthosiphon pisum symbiotic bacterium).